Reading from the N-terminus, the 262-residue chain is Type III pantothenate kinase (262 aa).

An ATP-binding site is contributed by 9-16 (DAGNSRIK). Residues tyrosine 96 and 103-106 (GSDR) each bind substrate. Aspartate 105 functions as the Proton acceptor in the catalytic mechanism. Position 129 (threonine 129) interacts with ATP. Threonine 189 is a substrate binding site.

This sequence belongs to the type III pantothenate kinase family. In terms of assembly, homodimer. The cofactor is NH4(+). Requires K(+) as cofactor.

The protein localises to the cytoplasm. The catalysed reaction is (R)-pantothenate + ATP = (R)-4'-phosphopantothenate + ADP + H(+). Its pathway is cofactor biosynthesis; coenzyme A biosynthesis; CoA from (R)-pantothenate: step 1/5. Catalyzes the phosphorylation of pantothenate (Pan), the first step in CoA biosynthesis. This is Type III pantothenate kinase from Burkholderia multivorans (strain ATCC 17616 / 249).